A 678-amino-acid chain; its full sequence is Secretin ExeD (678 aa).

The first 25 residues, 1-25 (MINKGKSWRLATVAAALMMAGSAWA), serve as a signal peptide directing secretion. The segment at 26–122 (TEYSASFKNA…VVDETNPGIG (97 aa)) is N0. Residues 124 to 188 (EMVTRVVPVR…EVVRRVDKAG (65 aa)) form an N1 region. An N2 region spans residues 189–264 (DQEVDIIKLR…MVRQLDRDLQ (76 aa)). The tract at residues 267–347 (GNTRVFYLKY…ELEQVVAKLD (81 aa)) is N3. Residues 352–602 (QVLVEAIIVE…VFIRPTILRD (251 aa)) form a secretin region. Residues 604–678 (HVYSGISSNK…GAQPFVQGNK (75 aa)) are s domain.

The protein belongs to the bacterial secretin family. GSP D subfamily. Forms a cylindrical channel with 15 subunits.

Its subcellular location is the cell outer membrane. Involved in a type II secretion system (T2SS, formerly general secretion pathway, GSP) for the export of proteins. This subunit forms the outer membrane channel. This is Secretin ExeD (exeD) from Aeromonas salmonicida.